The primary structure comprises 20 residues: Putative 18 kDa spermidine-binding protein (20 aa).

Dimer of 18 kDa and 60 kDa subunit.

It localises to the microsome membrane. The protein localises to the endoplasmic reticulum membrane. In terms of biological role, may have spermidine-binding activity. This chain is Putative 18 kDa spermidine-binding protein, found in Zea mays (Maize).